The chain runs to 157 residues: Transcription antitermination protein NusB (157 aa).

The protein belongs to the NusB family.

Involved in transcription antitermination. Required for transcription of ribosomal RNA (rRNA) genes. Binds specifically to the boxA antiterminator sequence of the ribosomal RNA (rrn) operons. The polypeptide is Transcription antitermination protein NusB (Xylella fastidiosa (strain Temecula1 / ATCC 700964)).